The primary structure comprises 110 residues: Large ribosomal subunit protein eL34 (110 aa).

The tract at residues 1–41 (MKNVLIHKGATYKTRSNRRRKVRTPSGKLVNRRVKKHSKKH) is disordered. Residues 30–41 (VNRRVKKHSKKH) show a composition bias toward basic residues.

It belongs to the eukaryotic ribosomal protein eL34 family.

The protein is Large ribosomal subunit protein eL34 (RPL34) of Encephalitozoon cuniculi (strain GB-M1) (Microsporidian parasite).